A 768-amino-acid chain; its full sequence is Protein transport protein Sec23A (768 aa).

T2 is subject to N-acetylthreonine. Zn(2+)-binding residues include C61, C66, C85, and C88. Phosphothreonine is present on T308. Residues 632–718 (PEPVLLDSSS…EHGGSQARFL (87 aa)) form a Gelsolin-like repeat.

The protein belongs to the SEC23/SEC24 family. SEC23 subfamily. In terms of assembly, COPII is composed of at least five proteins: the Sec23/24 complex, the Sec13/31 complex and Sar1. Interacts with SEC23IP. Interacts with HTR4. Interacts with SEC16A. Interacts with SLC6A4. Interacts (as part of the Sec23/24 complex) with SEC22B; recruits SEC22B into COPII-coated vesicles and allows the transport of this cargo from the endoplasmic reticulum to the Golgi. Interacts (via Gelsolin-like repeat) with MIA2 and MIA3; specifically involved in the transport of large cargos like the collagen COL7A1. Interacts with DDHD1. Interacts with TMEM39A. Interacts with SACM1L; this interaction is reduced in the absence of TMEM39A. Interacts with kinase FAM20C; transport of FAM20C from the endoplasmic reticulum to the Golgi is likely to be mediated by COPII vesicles.

The protein localises to the cytoplasmic vesicle. It is found in the COPII-coated vesicle membrane. It localises to the endoplasmic reticulum membrane. The protein resides in the cytoplasm. Its subcellular location is the cytosol. Component of the coat protein complex II (COPII) which promotes the formation of transport vesicles from the endoplasmic reticulum (ER). The coat has two main functions, the physical deformation of the endoplasmic reticulum membrane into vesicles and the selection of cargo molecules for their transport to the Golgi complex. Required for the translocation of insulin-induced glucose transporter SLC2A4/GLUT4 to the cell membrane. The protein is Protein transport protein Sec23A of Bos taurus (Bovine).